The following is a 203-amino-acid chain: Twist-related protein 1 (203 aa).

Residues 1 to 18 (MMQDVSSSPVSPADDSLS) show a composition bias toward low complexity. Residues 1 to 105 (MMQDVSSSPV…SGGGSPQSYE (105 aa)) are disordered. The segment covering 34 to 43 (RGGRKRRSSR) has biased composition (basic residues). Gly residues-rich tracts occupy residues 46–65 (AGGG…GGDE) and 80–100 (GCGG…GGGS). The bHLH domain maps to 109–160 (TQRVMANVRGRQRTQSLNEAFAALRKIIPTLPSDKLSKIQTLKLAARYIDFL). Positions 162-192 (QVLQSDELDSKMASCSYVAHERLSYAFSVWR) are sufficient for transactivation activity.

As to quaternary structure, efficient DNA binding requires dimerization with another bHLH protein. Homodimer or heterodimer with E proteins such as TCF3. ID1 binds preferentially to TCF3 but does not interact efficiently with TWIST1 so ID1 levels control the amount of TCF3 available to dimerize with TWIST and thus determine the type of dimer formed.

The protein resides in the nucleus. Its function is as follows. Acts as a transcriptional regulator. Inhibits myogenesis by sequestrating E proteins, inhibiting trans-activation by MEF2, and inhibiting DNA-binding by MYOD1 through physical interaction. This interaction probably involves the basic domains of both proteins. Also represses expression of pro-inflammatory cytokines such as TNFA and IL1B. Regulates cranial suture patterning and fusion. Activates transcription as a heterodimer with E proteins. Regulates gene expression differentially, depending on dimer composition. Homodimers induce expression of FGFR2 and POSTN while heterodimers repress FGFR2 and POSTN expression and induce THBS1 expression. Heterodimerization is also required for osteoblast differentiation. Represses the activity of the circadian transcriptional activator: NPAS2-BMAL1 heterodimer. This is Twist-related protein 1 (TWIST1) from Callithrix jacchus (White-tufted-ear marmoset).